Consider the following 89-residue polypeptide: Small ribosomal subunit protein uS15 (89 aa).

Belongs to the universal ribosomal protein uS15 family. In terms of assembly, part of the 30S ribosomal subunit. Forms a bridge to the 50S subunit in the 70S ribosome, contacting the 23S rRNA.

In terms of biological role, one of the primary rRNA binding proteins, it binds directly to 16S rRNA where it helps nucleate assembly of the platform of the 30S subunit by binding and bridging several RNA helices of the 16S rRNA. Its function is as follows. Forms an intersubunit bridge (bridge B4) with the 23S rRNA of the 50S subunit in the ribosome. This is Small ribosomal subunit protein uS15 from Desulforapulum autotrophicum (strain ATCC 43914 / DSM 3382 / VKM B-1955 / HRM2) (Desulfobacterium autotrophicum).